Reading from the N-terminus, the 647-residue chain is DNA mismatch repair protein MutL (647 aa).

The protein belongs to the DNA mismatch repair MutL/HexB family.

Its function is as follows. This protein is involved in the repair of mismatches in DNA. It is required for dam-dependent methyl-directed DNA mismatch repair. May act as a 'molecular matchmaker', a protein that promotes the formation of a stable complex between two or more DNA-binding proteins in an ATP-dependent manner without itself being part of a final effector complex. In Bacillus cereus (strain G9842), this protein is DNA mismatch repair protein MutL.